We begin with the raw amino-acid sequence, 464 residues long: Glutathione reductase (464 aa).

FAD contacts are provided by S17 and G18. S17 lines the glutathione pocket. Glutathione is bound at residue R24. E37, T45, C46, and K54 together coordinate FAD. C46 and C51 are oxidised to a cystine. Y103 is a glutathione binding site. Residue A119 coordinates FAD. 6 residues coordinate NADP(+): A186, I189, E192, R209, R215, and G274. D315 serves as a coordination point for FAD. E321 contacts NADP(+). Position 323 (T323) interacts with FAD. Position 331 (R331) interacts with glutathione. An NADP(+)-binding site is contributed by V354. H453 contributes to the FAD binding site. The active-site Proton acceptor is H453.

It belongs to the class-I pyridine nucleotide-disulfide oxidoreductase family. As to quaternary structure, homodimer. FAD is required as a cofactor.

The protein resides in the cytoplasm. It localises to the mitochondrion. It carries out the reaction 2 glutathione + NADP(+) = glutathione disulfide + NADPH + H(+). Catalyzes the reduction of glutathione disulfide (GSSG) to reduced glutathione (GSH). Constitutes the major mechanism to maintain a high GSH:GSSG ratio in the cytosol. The protein is Glutathione reductase (pgr1) of Schizosaccharomyces pombe (strain 972 / ATCC 24843) (Fission yeast).